The sequence spans 424 residues: Histidine--tRNA ligase (424 aa).

The interval Met1–Pro22 is disordered.

This sequence belongs to the class-II aminoacyl-tRNA synthetase family. In terms of assembly, homodimer.

It is found in the cytoplasm. It carries out the reaction tRNA(His) + L-histidine + ATP = L-histidyl-tRNA(His) + AMP + diphosphate + H(+). The chain is Histidine--tRNA ligase from Rubrobacter xylanophilus (strain DSM 9941 / JCM 11954 / NBRC 16129 / PRD-1).